We begin with the raw amino-acid sequence, 351 residues long: DNA polymerase IV (351 aa).

Positions 4–185 constitute a UmuC domain; it reads IIHVDMDCFF…LPLAKIPGVG (182 aa). Mg(2+) contacts are provided by aspartate 8 and aspartate 103. Glutamate 104 is a catalytic residue.

It belongs to the DNA polymerase type-Y family. As to quaternary structure, monomer. Mg(2+) serves as cofactor.

It localises to the cytoplasm. It catalyses the reaction DNA(n) + a 2'-deoxyribonucleoside 5'-triphosphate = DNA(n+1) + diphosphate. In terms of biological role, poorly processive, error-prone DNA polymerase involved in untargeted mutagenesis. Copies undamaged DNA at stalled replication forks, which arise in vivo from mismatched or misaligned primer ends. These misaligned primers can be extended by PolIV. Exhibits no 3'-5' exonuclease (proofreading) activity. May be involved in translesional synthesis, in conjunction with the beta clamp from PolIII. The sequence is that of DNA polymerase IV from Escherichia coli O139:H28 (strain E24377A / ETEC).